The following is a 333-amino-acid chain: Phosphate acyltransferase (333 aa).

Belongs to the PlsX family. As to quaternary structure, homodimer. Probably interacts with PlsY.

The protein localises to the cytoplasm. It catalyses the reaction a fatty acyl-[ACP] + phosphate = an acyl phosphate + holo-[ACP]. It participates in lipid metabolism; phospholipid metabolism. Catalyzes the reversible formation of acyl-phosphate (acyl-PO(4)) from acyl-[acyl-carrier-protein] (acyl-ACP). This enzyme utilizes acyl-ACP as fatty acyl donor, but not acyl-CoA. This Ligilactobacillus salivarius (strain UCC118) (Lactobacillus salivarius) protein is Phosphate acyltransferase.